We begin with the raw amino-acid sequence, 250 residues long: uncharacterized protein (250 aa).

To class-3 of adenylyl cyclases.

This is an uncharacterized protein from Mycobacterium tuberculosis (strain ATCC 25618 / H37Rv).